Reading from the N-terminus, the 465-residue chain is Cysteine--tRNA ligase (465 aa).

A Zn(2+)-binding site is contributed by cysteine 30. The short motif at methionine 32–histidine 42 is the 'HIGH' region element. Zn(2+)-binding residues include cysteine 214, histidine 239, and glutamate 243. Positions lysine 271 to serine 275 match the 'KMSKS' region motif. Lysine 274 lines the ATP pocket.

Belongs to the class-I aminoacyl-tRNA synthetase family. In terms of assembly, monomer. Requires Zn(2+) as cofactor.

The protein resides in the cytoplasm. It carries out the reaction tRNA(Cys) + L-cysteine + ATP = L-cysteinyl-tRNA(Cys) + AMP + diphosphate. This chain is Cysteine--tRNA ligase, found in Paraburkholderia xenovorans (strain LB400).